A 71-amino-acid polypeptide reads, in one-letter code: MRGIILALLLALAGCEKSQYEPFFSESKTYVYNYEGIILNGIPENGLARSGIKLNCKVELSGYAQRSYMLK.

The first 15 residues, 1-15 (MRGIILALLLALAGC), serve as a signal peptide directing secretion. Positions 24 to 71 (FSESKTYVYNYEGIILNGIPENGLARSGIKLNCKVELSGYAQRSYMLK) constitute a Vitellogenin domain.

In terms of tissue distribution, produced by the liver, secreted into the blood and then sequestered by receptor mediated endocytosis into growing oocytes, where it is generally cleaved, giving rise to the respective yolk components.

Precursor of the major egg-yolk proteins that are sources of nutrients during early development of oviparous organisms. This chain is Vitellogenin-B2, found in Xenopus laevis (African clawed frog).